A 169-amino-acid chain; its full sequence is Menaquinol:cytochrome c reductase iron-sulfur subunit (169 aa).

The Rieske domain occupies 62 to 160 (EPKRFDFKVK…FEVKDGKLYL (99 aa)). [2Fe-2S] cluster contacts are provided by Cys102, His104, Cys123, and His126. Cys107 and Cys125 are joined by a disulfide.

This sequence belongs to the Rieske iron-sulfur protein family. The main subunits of the menaquinol:cytochrome c complex are a Rieske-type iron-sulfur protein (QcrA), a cytochrome b (QcrB) and a cytochrome c (QcrC). It depends on [2Fe-2S] cluster as a cofactor.

Functionally, component of the menaquinol:cytochrome c reductase complex. The Rieske protein is a high potential 2Fe-2S protein. This Geobacillus thermodenitrificans protein is Menaquinol:cytochrome c reductase iron-sulfur subunit (qcrA).